The following is a 244-amino-acid chain: Probable hydrolase R7 (244 aa).

A signal peptide spans 1–20; it reads MTKPFILLVPGSFAPETIYA. Catalysis depends on charge relay system residues aspartate 192 and histidine 224. Asparagine 227 carries N-linked (GlcNAc...) asparagine glycosylation.

It belongs to the AB hydrolase superfamily.

Its pathway is secondary metabolite biosynthesis. Probable hydrolase; part of the gene cluster that mediates the biosynthesis of squalestatin S1 (SQS1, also known as zaragozic acid A), a lead compound for the treatment of hyper-cholesterolemia by targeting squalene synthase (SS). Both phenylalanine and benzoic acid are known precursors of SQS1 and so it is unsurprising that the cluster also contains genes potentially involved in benzoate production such as phenyl-alanine ammonia lysase (PAL) M7, which catalyzes the first step in the degradation of phenylalanine, or the NADP-dependent dehydrogenase M3. The cluster contains two PKS encoding genes. The tetraketide synthase is responsible for the biosynthesis of the tetraketide sidechain of SQS1. The biosynthesis must involve 3 rounds of chain extension. After the first and second rounds methyl-transfer occurs, and in all rounds of extension the ketoreductase and dehydratase areactive. The enoyl reductase and C-MeT are not active in the final round of extension. The other PKS is therefore likely to encode squalestatin hexaketide synthase (SQHKS). The hexaketide main chain is initiated by benzoate which is an unusual starter unit for a highly reducing polyketide synthase. The cluster also contains a gene encoding a citrate synthase-like protein R3 presumably involved in linking the hexaketide to the oxaloacetate moiety. Formation of the tetraketide CoA may be catalyzed by the M9 CoA ligase, but the mechanism of release of the tetraketide and the hexaketide from their respective PKS remains unknown, although the cluster encodes a potential esterase (M8) and a possible hydrolase (M10) which could be involved in these processes. Two acyltransferases (AT), M4 and R4, are also encoded in the cluster. M4 is responsible for loading of the tetraketide sidechain from CoA onto the squalestatin core as the final step of biosynthesis. M4 appears to have a broad substrate selectivity for its acyl CoA substrate, allowing the in vitro synthesis of novel squalestatins. The biosynthesis of SQS1 requires several oxidative steps likely performed by oxidoreductases M1, R1 and R2. Finally, in support of the identification of the cluster as being responsible for SQS1 production, the cluster contains a gene encoding a putative squalene synthase (SS) R6, suggesting a likely mechanism for self-resistance. This Phoma sp. (strain ATCC 20986 / MF5453) protein is Probable hydrolase R7.